The chain runs to 1997 residues: Chromatin-remodeling ATPase INO80 (1997 aa).

Disordered regions lie at residues 1–378, 397–579, and 674–858; these read MDHF…AAPS, IAAP…AENE, and ERKK…EKVV. A compositionally biased stretch (basic and acidic residues) spans 12–25; sequence PHFDEDGTEGRGDR. The segment covering 32 to 41 has biased composition (pro residues); it reads GPAPPPPPPR. Positions 49–64 are enriched in low complexity; it reads NPVSSNSAVQSQAAAA. A compositionally biased stretch (polar residues) spans 89–107; that stretch reads STNSMRATPHSSSSFNLRS. A compositionally biased stretch (basic and acidic residues) spans 108–117; sequence PTREPSEYRH. Composition is skewed to low complexity over residues 118–156, 203–230, and 240–251; these read PLSSLATPAPFAASPPTSIANANNTNNNNALGAAGSLSS, SLQAPPAITPIAGLSAPAPASGSLPLSA, and SSSSQPPARASQ. Residues 264-276 show a composition bias toward basic and acidic residues; that stretch reads SFRDRDSSVREKS. Residues 288–297 are compositionally biased toward polar residues; the sequence is EASNGISGSS. Residues 298–317 are compositionally biased toward basic and acidic residues; the sequence is PRKDRDRDRDHRGTTRESQR. Polar residues-rich tracts occupy residues 318–340 and 366–378; these read RSVSGHSDTGSSWRNATQTSASN and VDNTTSSSIAAPS. The segment covering 411–420 has biased composition (low complexity); that stretch reads SPRLSLRPPS. Polar residues-rich tracts occupy residues 433-442, 451-465, and 472-481; these read NPTNGTTSTA, SPPSKMSPGTSTNPS, and SFSNILSSSE. 2 stretches are compositionally biased toward basic and acidic residues: residues 500–519 and 529–540; these read VPMKVERADSSEKVVKEKKE and RISDIRHSESTP. A coiled-coil region spans residues 666–735; the sequence is ERELFAEKER…VQQTRLILQK (70 aa). Positions 689-707 are enriched in low complexity; it reads MATTMEAKAAALARASAAQ. The segment covering 709 to 723 has biased composition (basic and acidic residues); that stretch reads EAERQKYMREAERAN. Residues 769-781 show a composition bias toward basic residues; it reads TKGKGRAGARPKK. The span at 782-793 shows a compositional bias: basic and acidic residues; the sequence is SKEQKQAEKDAA. Residues 794–806 are compositionally biased toward low complexity; that stretch reads EAAQAALDAGLEL. Residues 824–858 are compositionally biased toward basic and acidic residues; the sequence is APKEADVDKDKENKEPQEPKEPKEPKEKVIKEKVV. Residues 881 to 1006 enclose the DBINO domain; that stretch reads IWRDLARKDV…SHFIGKKIKT (126 aa). A Helicase ATP-binding domain is found at 1130–1302; sequence VNLYEQGING…WALLHFIMPS (173 aa). 1143-1150 contacts ATP; that stretch reads DEMGLGKT. The DEAQ box signature appears at 1253–1256; it reads DEAQ. Residues 1702-1858 enclose the Helicase C-terminal domain; that stretch reads KLDELLRELK…GSSAAGGGVD (157 aa). A compositionally biased stretch (basic and acidic residues) spans 1891–1902; it reads ELLESGELDKMQ. The tract at residues 1891-1986 is disordered; that stretch reads ELLESGELDK…GSKKAKTTKQ (96 aa). The span at 1903–1914 shows a compositional bias: basic residues; the sequence is KKSRGGNKRKRG. The span at 1919-1933 shows a compositional bias: basic and acidic residues; that stretch reads EGKEVSLDEMYHEGE. Residues 1954 to 1967 show a composition bias toward gly residues; sequence AAGGEGGDGKGAVG. The segment covering 1970 to 1985 has biased composition (basic residues); sequence AKKRKTGGSKKAKTTK.

It belongs to the SNF2/RAD54 helicase family. In terms of assembly, component of the INO80 chromatin-remodeling complex.

Its subcellular location is the nucleus. It carries out the reaction ATP + H2O = ADP + phosphate + H(+). Its function is as follows. ATPase component of the INO80 complex which remodels chromatin by shifting nucleosomes and is involved in DNA repair. In Neurospora crassa (strain ATCC 24698 / 74-OR23-1A / CBS 708.71 / DSM 1257 / FGSC 987), this protein is Chromatin-remodeling ATPase INO80 (crf2-1).